The sequence spans 1037 residues: Cysteine-rich motor neuron 1 protein (1037 aa).

The N-terminal stretch at 1–34 (MYLVAGGRGLAGCGHLSVSLLGLLLLLARSGTRA) is a signal peptide. The region spanning 35 to 112 (LVCLPCDESK…EYEVGVCEDE (78 aa)) is the IGFBP N-terminal domain. The Extracellular segment spans residues 35–940 (LVCLPCDESK…HPGEDSSLDS (906 aa)). 6 disulfide bridges follow: C37/C60, C40/C62, C45/C63, C51/C66, C74/C90, and C84/C109. The Cell attachment site signature appears at 314–316 (RGD). N330 is a glycosylation site (N-linked (GlcNAc...) asparagine). VWFC domains are found at residues 334-391 (PACV…PVCE) and 401-457 (AGCY…PVCE). 4 consecutive Antistasin-like domains span residues 469–498 (CGEL…TCQC), 505–532 (CLGL…LCQC), 539–564 (CRPT…ICRC), and 567–592 (CPEL…ICKC). VWFC domains follow at residues 606–663 (GTCL…PSCT), 677–735 (SICH…PQCT), 751–809 (SYCR…PYCL), and 817–874 (VVCH…PMCP). The helical transmembrane segment at 941–961 (IVSVVVPIIICLSIIIAFLLI) threads the bilayer. At 962–1037 (NQKKQWVPLL…LQADNFYQTV (76 aa)) the chain is on the cytoplasmic side. Residue T1036 is modified to Phosphothreonine.

As to quaternary structure, interacts with BMP4 and BMP7. As to expression, expressed during embryonic development in brain, kidney, spinal cord, testis, lens, vibrissae, pinna, tooth primordia and in specific regions of the CNS. Expressed in adult lens. Displays male-specific expression in the fetal gonads with the strongest expression in the Sertoli cells of developing testis.

It is found in the membrane. In terms of biological role, may play a role in CNS development by interacting with growth factors implicated in motor neuron differentiation and survival. May play a role in capillary formation and maintenance during angiogenesis. Modulates BMP activity by affecting its processing and delivery to the cell surface. The chain is Cysteine-rich motor neuron 1 protein (Crim1) from Mus musculus (Mouse).